We begin with the raw amino-acid sequence, 283 residues long: Putative Ig-like domain-containing protein ORF10 (283 aa).

The signal sequence occupies residues 1 to 55 (MIDKRNKKAVTHISTCLCHSSIPIYGDSPFLNTHRAAMDPRPLVLLLLLASHIST). Asn-75, Asn-92, Asn-121, Asn-157, Asn-179, Asn-198, Asn-223, and Asn-229 each carry an N-linked (GlcNAc...) asparagine; by host glycan. The region spanning 129 to 227 (QPLGQSIHHA…IDQQTNLTLT (99 aa)) is the Ig-like domain.

The polypeptide is Putative Ig-like domain-containing protein ORF10 (Galliformes (FAdV-1)).